We begin with the raw amino-acid sequence, 399 residues long: Elongation factor Tu 2 (399 aa).

One can recognise a tr-type G domain in the interval 10–209 (KPHVNIGTIG…QVDGYIPEPE (200 aa)). The tract at residues 19–26 (GHVDHGKT) is G1. 19-26 (GHVDHGKT) contributes to the GTP binding site. T26 lines the Mg(2+) pocket. The interval 60-64 (GITIA) is G2. Residues 81–84 (DCPG) are G3. Residues 81–85 (DCPGH) and 136–139 (NKAD) contribute to the GTP site. Positions 136–139 (NKAD) are G4. A G5 region spans residues 174–176 (SAL).

The protein belongs to the TRAFAC class translation factor GTPase superfamily. Classic translation factor GTPase family. EF-Tu/EF-1A subfamily. As to quaternary structure, monomer.

Its subcellular location is the cytoplasm. The catalysed reaction is GTP + H2O = GDP + phosphate + H(+). Its function is as follows. GTP hydrolase that promotes the GTP-dependent binding of aminoacyl-tRNA to the A-site of ribosomes during protein biosynthesis. This Syntrophotalea carbinolica (strain DSM 2380 / NBRC 103641 / GraBd1) (Pelobacter carbinolicus) protein is Elongation factor Tu 2.